A 424-amino-acid chain; its full sequence is ATP-sensitive inward rectifier potassium channel 8 (424 aa).

Topologically, residues 1–69 (MLARKSIIPE…IFTTLVDLKW (69 aa)) are cytoplasmic. A Phosphoserine modification is found at serine 6. Residues 70 to 94 (RHTLVIFTMSFLCSWLLFAIMWWLV) form a helical membrane-spanning segment. Residues 95 to 126 (AFAHGDIYAYMEKGITEKSGLESAVCVTNVRS) lie on the Extracellular side of the membrane. Positions 127-138 (FTSAFLFSIEVQ) form an intramembrane region, helical; Pore-forming. Residues 139-145 (VTIGFGG) constitute an intramembrane region (pore-forming). The Selectivity filter motif lies at 140-145 (TIGFGG). Residues 146–154 (RMMTEECPL) are Extracellular-facing. Residues 155–176 (AITVLILQNIVGLIINAVMLGC) traverse the membrane as a helical segment. Over 177–424 (IFMKTAQAHR…PEGNQCPSES (248 aa)) the chain is Cytoplasmic. Residues 374–424 (LSHQNSLRKRNSMRRNNSMRRSNSIRRNNSSLMVPKVQFMTPEGNQCPSES) are disordered. Low complexity predominate over residues 387-404 (RRNNSMRRSNSIRRNNSS).

Belongs to the inward rectifier-type potassium channel (TC 1.A.2.1) family. KCNJ8 subfamily. In terms of assembly, interacts with ABCC9. In terms of tissue distribution, widely expressed, including in pancreatic islets, pituitary, skeletal muscle and heart.

Its subcellular location is the membrane. The enzyme catalyses K(+)(in) = K(+)(out). In terms of biological role, inward rectifier potassium channels are characterized by a greater tendency to allow potassium to flow into the cell rather than out of it. Their voltage dependence is regulated by the concentration of extracellular potassium; as external potassium is raised, the voltage range of the channel opening shifts to more positive voltages. The inward rectification is mainly due to the blockage of outward current by internal magnesium. This channel is activated by internal ATP and can be blocked by external barium. Can form a sulfonyllurea-sensitive but ATP-insensitive potassium channel with ABCC9. The sequence is that of ATP-sensitive inward rectifier potassium channel 8 (Kcnj8) from Rattus norvegicus (Rat).